A 944-amino-acid polypeptide reads, in one-letter code: Neutral alpha-glucosidase AB (944 aa).

The N-terminal stretch at Met-1–Ala-32 is a signal peptide. Residues Cys-41 and Cys-47 are joined by a disulfide bond. Ser-52 is modified (phosphoserine). N-linked (GlcNAc...) asparagine glycosylation is present at Asn-97. A disordered region spans residues His-180 to Pro-238. The span at Asp-207–Ser-236 shows a compositional bias: basic and acidic residues. Residues Asp-283 and Asp-429 each contribute to the substrate site. The active-site Nucleophile is Asp-542. Residue Arg-602 coordinates substrate. Asp-618 acts as the Proton donor in catalysis. Cys-633 and Cys-644 are joined by a disulfide. Position 676 (His-676) interacts with substrate.

It belongs to the glycosyl hydrolase 31 family. As to quaternary structure, heterodimer of a catalytic alpha subunit (GANAB) and a beta subunit (PRKCSH). Binds glycosylated PTPRC.

It is found in the endoplasmic reticulum. The protein resides in the golgi apparatus. Its subcellular location is the melanosome. It catalyses the reaction N(4)-(alpha-D-Glc-(1-&gt;3)-alpha-D-Man-(1-&gt;2)-alpha-D-Man-(1-&gt;2)-alpha-D-Man-(1-&gt;3)-[alpha-D-Man-(1-&gt;2)-alpha-D-Man-(1-&gt;3)-[alpha-D-Man-(1-&gt;2)-alpha-D-Man-(1-&gt;6)]-alpha-D-Man-(1-&gt;6)]-beta-D-Man-(1-&gt;4)-beta-D-GlcNAc-(1-&gt;4)-beta-D-GlcNAc)-L-asparaginyl-[protein] + H2O = N(4)-(alpha-D-Man-(1-&gt;2)-alpha-D-Man-(1-&gt;2)-alpha-D-Man-(1-&gt;3)-[alpha-D-Man-(1-&gt;2)-alpha-D-Man-(1-&gt;3)-[alpha-D-Man-(1-&gt;2)-alpha-D-Man-(1-&gt;6)]-alpha-D-Man-(1-&gt;6)]-beta-D-Man-(1-&gt;4)-beta-D-GlcNAc-(1-&gt;4)-beta-D-GlcNAc)-L-asparaginyl-[protein] (N-glucan mannose isomer 9A1,2,3B1,2,3) + beta-D-glucose. The enzyme catalyses N(4)-(alpha-D-Glc-(1-&gt;3)-alpha-D-Glc-(1-&gt;3)-alpha-D-Man-(1-&gt;2)-alpha-D-Man-(1-&gt;2)-alpha-D-Man-(1-&gt;3)-[alpha-D-Man-(1-&gt;2)-alpha-D-Man-(1-&gt;3)-[alpha-D-Man-(1-&gt;2)-alpha-D-Man-(1-&gt;6)]-alpha-D-Man-(1-&gt;6)]-beta-D-Man-(1-&gt;4)-beta-D-GlcNAc-(1-&gt;4)-beta-D-GlcNAc)-L-asparaginyl-[protein] + H2O = N(4)-(alpha-D-Glc-(1-&gt;3)-alpha-D-Man-(1-&gt;2)-alpha-D-Man-(1-&gt;2)-alpha-D-Man-(1-&gt;3)-[alpha-D-Man-(1-&gt;2)-alpha-D-Man-(1-&gt;3)-[alpha-D-Man-(1-&gt;2)-alpha-D-Man-(1-&gt;6)]-alpha-D-Man-(1-&gt;6)]-beta-D-Man-(1-&gt;4)-beta-D-GlcNAc-(1-&gt;4)-beta-D-GlcNAc)-L-asparaginyl-[protein] + beta-D-glucose. Its pathway is glycan metabolism; N-glycan metabolism. Functionally, catalytic subunit of glucosidase II that cleaves sequentially the 2 innermost alpha-1,3-linked glucose residues from the Glc(2)Man(9)GlcNAc(2) oligosaccharide precursor of immature glycoproteins. Required for PKD1/Polycystin-1 and PKD2/Polycystin-2 maturation and localization to the cell surface and cilia. This is Neutral alpha-glucosidase AB from Mus musculus (Mouse).